The following is a 318-amino-acid chain: NADH-ubiquinone oxidoreductase chain 1 (318 aa).

The next 9 membrane-spanning stretches (helical) occupy residues Phe-2 to Leu-22, Pro-37 to Ile-57, Leu-69 to Met-89, Leu-100 to Gly-120, Val-136 to Met-156, His-171 to Ala-191, Glu-206 to Ala-226, Glu-253 to Ile-273, and Leu-294 to Ile-314.

Belongs to the complex I subunit 1 family.

It localises to the mitochondrion inner membrane. The enzyme catalyses a ubiquinone + NADH + 5 H(+)(in) = a ubiquinol + NAD(+) + 4 H(+)(out). Its function is as follows. Core subunit of the mitochondrial membrane respiratory chain NADH dehydrogenase (Complex I) that is believed to belong to the minimal assembly required for catalysis. Complex I functions in the transfer of electrons from NADH to the respiratory chain. The immediate electron acceptor for the enzyme is believed to be ubiquinone. This Tolypeutes matacus (Southern three-banded armadillo) protein is NADH-ubiquinone oxidoreductase chain 1 (MT-ND1).